A 266-amino-acid chain; its full sequence is Prolactin-7A1 (266 aa).

A signal peptide spans 1-30; that stretch reads MPLSFTQPCSSGALLLLVVSNLLLWENVAC. N-linked (GlcNAc...) asparagine glycosylation is found at Asn36, Asn58, Asn110, Asn149, and Asn157. 2 disulfide bridges follow: Cys114–Cys231 and Cys248–Cys257.

This sequence belongs to the somatotropin/prolactin family. In terms of tissue distribution, expressed specifically in the placenta. Detected only in the trophoblast giant cells.

The protein resides in the secreted. The polypeptide is Prolactin-7A1 (Prl7a1) (Mus musculus (Mouse)).